Here is a 69-residue protein sequence, read N- to C-terminus: DNA-directed RNA polymerase subunit omega (69 aa).

Belongs to the RNA polymerase subunit omega family. The RNAP catalytic core consists of 2 alpha, 1 beta, 1 beta' and 1 omega subunit. When a sigma factor is associated with the core the holoenzyme is formed, which can initiate transcription.

It catalyses the reaction RNA(n) + a ribonucleoside 5'-triphosphate = RNA(n+1) + diphosphate. In terms of biological role, promotes RNA polymerase assembly. Latches the N- and C-terminal regions of the beta' subunit thereby facilitating its interaction with the beta and alpha subunits. The sequence is that of DNA-directed RNA polymerase subunit omega from Hahella chejuensis (strain KCTC 2396).